The primary structure comprises 162 residues: EF-hand calcium-binding domain-containing protein 11 (162 aa).

3 consecutive EF-hand domains span residues S18 to Y53, L91 to K126, and L127 to K162. Residues D140, D142, D144, H146, and D151 each coordinate Ca(2+).

The protein is EF-hand calcium-binding domain-containing protein 11 (Efcab11) of Rattus norvegicus (Rat).